A 133-amino-acid chain; its full sequence is Fatty acid-binding protein homolog 2 (133 aa).

A fatty acid is bound by residues Arg-107 and 127 to 129 (RTY).

The protein belongs to the calycin superfamily. Fatty-acid binding protein (FABP) family.

May play a role in the acquisition, storage, and transport of lipids, and may be important to the organism since it is incapable of synthesizing most of its lipids de novo. The protein is Fatty acid-binding protein homolog 2 (FABP2) of Echinococcus granulosus (Hydatid tapeworm).